We begin with the raw amino-acid sequence, 624 residues long: Heat shock factor protein 5 (624 aa).

Residues 11–228 mediate DNA binding; it reads NPNNFPAKLW…FHRSFRRDNL (218 aa). Disordered regions lie at residues 52 to 77, 112 to 138, 186 to 214, 429 to 461, and 572 to 605; these read LSPPGPGAGGAGGAGSSGGGGGSGVG, GAAGPGPGPGAGGPAGDGPLHHFHSPH, SASASTSPLQHQDPPPQPAGPRPEQHGPV, CPSSQANRGQHILPNANSSNPSSTSQASQLEPL, and GPANKSTKDTGLSTPARYRERRSNSQGKSPDLHL. Gly residues-rich tracts occupy residues 58-77 and 112-127; these read GAGGAGGAGSSGGGGGSGVG and GAAGPGPGPGAGGPAG. 2 stretches are compositionally biased toward low complexity: residues 186 to 197 and 442 to 457; these read SASASTSPLQHQ and PNANSSNPSSTSQASQ. Residue Ser600 is modified to Phosphoserine.

It belongs to the HSF family. As to quaternary structure, homooligomer. As to expression, highly expressed in testis particularly in spermatocytes (at protein level). Not expressed in fetal testis and ovary.

Its subcellular location is the nucleus. The protein resides in the chromosome. DNA-binding transcription factor that is essential for male fertility, spermatogenesis and meiotic prophase progression in spermatocytes under non-stress conditions. Positvely and negatively regulates gene expression to ensure progression of meiotic prophase beyond pachytene stage in spermatocytes. Plays a role in male germline meiotic sex chromosome remodeling and silencing through regulation of SMARCA4. This is Heat shock factor protein 5 (Hsf5) from Mus musculus (Mouse).